We begin with the raw amino-acid sequence, 408 residues long: Ribulose bisphosphate carboxylase/oxygenase activase, chloroplastic (408 aa).

A chloroplast-targeting transit peptide spans 1-32 (MQVTMKSSAVSGQRVGGARVATRSVRRAQLQV). 138–145 (GGKGQGKT) is a binding site for ATP.

This sequence belongs to the RuBisCO activase family. As to quaternary structure, monomer.

The protein localises to the plastid. The protein resides in the chloroplast stroma. In terms of biological role, activation of RuBisCO (ribulose-1,5-bisphosphate carboxylase/oxygenase; EC 4.1.1.39) involves the ATP-dependent carboxylation of the epsilon-amino group of lysine leading to a carbamate structure. The polypeptide is Ribulose bisphosphate carboxylase/oxygenase activase, chloroplastic (Chlamydomonas reinhardtii (Chlamydomonas smithii)).